Here is a 478-residue protein sequence, read N- to C-terminus: RNA-binding protein 42 (478 aa).

Low complexity predominate over residues 1-20 (MASAMAGAGPAPGLPVAGGP). Positions 1 to 33 (MASAMAGAGPAPGLPVAGGPVVPGPGVGIPGKS) are disordered. Ala2 carries the post-translational modification N-acetylalanine. The residue at position 133 (Ser133) is a Phosphoserine. An asymmetric dimethylarginine mark is found at Arg151, Arg156, Arg166, and Arg179. Disordered stretches follow at residues 171-209 (LSSA…PPMA) and 317-354 (SLRP…PEKL). A compositionally biased stretch (pro residues) spans 193–205 (PPLPGPPGPPMML). A necessary for interaction with HNRNPK region spans residues 234 to 478 (DLGLGLGLGL…QKEKKKLGLR (245 aa)). The span at 343-354 (GEDKKKGKPEKL) shows a compositional bias: basic and acidic residues. The region spanning 379–457 (FRIFCGDLGN…RPIKLRKSMW (79 aa)) is the RRM domain.

This sequence belongs to the RRM RBM42 family. In terms of assembly, interacts with HNRNPK.

It is found in the nucleus. The protein localises to the cytoplasm. Its function is as follows. Binds (via the RRM domain) to the 3' untranslated region (UTR) of p21 mRNA. The protein is RNA-binding protein 42 (Rbm42) of Rattus norvegicus (Rat).